Consider the following 296-residue polypeptide: m7GpppN-mRNA hydrolase NUDT17 (296 aa).

A Nudix hydrolase domain is found at 90–236 (GRGVDVGVAV…DSGSPCGPLP (147 aa)). The short motif at 129–150 (GHVELGEQLLEAGLRELQEETG) is the Nudix box element. The Mg(2+) site is built by E144 and E148.

The protein belongs to the Nudix hydrolase family. Requires Mg(2+) as cofactor. The cofactor is Mn(2+).

The enzyme catalyses a 5'-end (N(7)-methyl 5'-triphosphoguanosine)-ribonucleoside in mRNA + H2O = N(7)-methyl-GDP + a 5'-end phospho-ribonucleoside in mRNA + 2 H(+). Its function is as follows. Acts as a decapping enzyme capable of hydrolyzing monomethylated capped RNAs (in vitro). Hydrolyzes monomethylated capped RNA after alpha and beta phosphates to form N(7)-methyl-GDP. Shows low activity towards unmethylated capped RNA. The sequence is that of m7GpppN-mRNA hydrolase NUDT17 (nudt17) from Xenopus laevis (African clawed frog).